Reading from the N-terminus, the 245-residue chain is Carbohydrate deacetylase (245 aa).

Histidine 59 and histidine 125 together coordinate Mg(2+).

Belongs to the YdjC deacetylase family. Homodimer. Requires Mg(2+) as cofactor.

In terms of biological role, probably catalyzes the deacetylation of acetylated carbohydrates an important step in the degradation of oligosaccharides. The sequence is that of Carbohydrate deacetylase from Listeria monocytogenes serotype 4a (strain HCC23).